We begin with the raw amino-acid sequence, 254 residues long: MNPATIITNFNNSQLQTPPTSPVSFDKYYTYYNIQLEQSTLMPQPSKIKNGDPFTWSDIQFIIKSNQLEIFARSRQQTIKYHKFKQWLKDNKLSINDYLLDYELHWKESELREQQHELVSDKEYSIDYPEDLIFHNPNDISILYNKFPYYFEPNVKHICIWSKLKIPVDKNSEVGDISVMTKKLINRYLEKTFVAKGISWDQIVWFKNWLSLQSVRSISHIHVILKDVDDKFVDELISGGSGEVLTLDDYRNLE.

The protein resides in the cytoplasm. Functionally, N-acetylglucosamine-induced protein which plays a role in the N-acetylglucosamine metabolic pathway. The chain is N-acetylglucosamine-induced protein 1 from Candida albicans (strain SC5314 / ATCC MYA-2876) (Yeast).